Consider the following 166-residue polypeptide: Transcription antitermination protein NusB (166 aa).

It belongs to the NusB family.

Its function is as follows. Involved in transcription antitermination. Required for transcription of ribosomal RNA (rRNA) genes. Binds specifically to the boxA antiterminator sequence of the ribosomal RNA (rrn) operons. This Chromohalobacter salexigens (strain ATCC BAA-138 / DSM 3043 / CIP 106854 / NCIMB 13768 / 1H11) protein is Transcription antitermination protein NusB.